Reading from the N-terminus, the 619-residue chain is Type VI secretion system component TssF1 (619 aa).

As to quaternary structure, interacts with TssA1.

Functionally, core component of the H1 type VI (H1-T6SS) secretion system that plays a role in the release of toxins targeting both eukaryotic and prokaryotic species. The sequence is that of Type VI secretion system component TssF1 from Pseudomonas aeruginosa (strain ATCC 15692 / DSM 22644 / CIP 104116 / JCM 14847 / LMG 12228 / 1C / PRS 101 / PAO1).